Reading from the N-terminus, the 1159-residue chain is WASH complex subunit 5 (1159 aa).

It belongs to the strumpellin family. In terms of assembly, component of the WASH core complex also described as WASH regulatory complex (SHRC) composed of WASH (WASHC1, WASH2P or WASH3P), WASHC2 (WASHC2A or WASHC2C), WASHC3, WASHC4 and WASHC5. The WASH core complex associates via WASHC2 with the F-actin-capping protein dimer (formed by CAPZA1, CAPZA2 or CAPZA3 and CAPZB) in a transient or substoichiometric manner which was initially described as WASH complex. Interacts with VCP, PI4K2A.

The protein resides in the cytoplasm. The protein localises to the cytosol. It localises to the endoplasmic reticulum. Its subcellular location is the early endosome. In terms of biological role, acts as a component of the WASH core complex that functions as a nucleation-promoting factor (NPF) at the surface of endosomes, where it recruits and activates the Arp2/3 complex to induce actin polymerization, playing a key role in the fission of tubules that serve as transport intermediates during endosome sorting. May be involved in axonal outgrowth. Involved in cellular localization of ADRB2. Involved in cellular trafficking of BLOC-1 complex cargos such as ATP7A and VAMP7. Involved in cytokinesis and following polar body extrusion during oocyte meiotic maturation. This is WASH complex subunit 5 from Mus musculus (Mouse).